We begin with the raw amino-acid sequence, 349 residues long: ATPase GET3 (349 aa).

ATP is bound at residue 26 to 33 (KGGVGKTT). D57 is a catalytic residue. Residues E243 and N270 each contribute to the ATP site. Residues C280 and C283 each contribute to the Zn(2+) site.

The protein belongs to the arsA ATPase family. In terms of assembly, homodimer. Component of the Golgi to ER traffic (GET) complex, which is composed of GET1, GET2 and GET3. Within the complex, GET1 and GET2 form a heterotetramer which is stabilized by phosphatidylinositol binding and which binds to the GET3 homodimer. Interacts with the chloride channel protein GEF1.

Its subcellular location is the cytoplasm. It is found in the endoplasmic reticulum. The protein resides in the golgi apparatus. In terms of biological role, ATPase required for the post-translational delivery of tail-anchored (TA) proteins to the endoplasmic reticulum. Recognizes and selectively binds the transmembrane domain of TA proteins in the cytosol. This complex then targets to the endoplasmic reticulum by membrane-bound receptors GET1 and GET2, where the tail-anchored protein is released for insertion. This process is regulated by ATP binding and hydrolysis. ATP binding drives the homodimer towards the closed dimer state, facilitating recognition of newly synthesized TA membrane proteins. ATP hydrolysis is required for insertion. Subsequently, the homodimer reverts towards the open dimer state, lowering its affinity for the GET1-GET2 receptor, and returning it to the cytosol to initiate a new round of targeting. Cooperates with the HDEL receptor ERD2 to mediate the ATP-dependent retrieval of resident ER proteins that contain a C-terminal H-D-E-L retention signal from the Golgi to the ER. Involved in low-level resistance to the oxyanions arsenite and arsenate, and in heat tolerance. This chain is ATPase GET3, found in Clavispora lusitaniae (strain ATCC 42720) (Yeast).